Consider the following 367-residue polypeptide: Alanine racemase (367 aa).

The active-site Proton acceptor; specific for D-alanine is Lys-40. Residue Lys-40 is modified to N6-(pyridoxal phosphate)lysine. Position 136 (Arg-136) interacts with substrate. The Proton acceptor; specific for L-alanine role is filled by Tyr-263. Met-310 provides a ligand contact to substrate.

Belongs to the alanine racemase family. Requires pyridoxal 5'-phosphate as cofactor.

The enzyme catalyses L-alanine = D-alanine. Its pathway is amino-acid biosynthesis; D-alanine biosynthesis; D-alanine from L-alanine: step 1/1. In terms of biological role, catalyzes the interconversion of L-alanine and D-alanine. May also act on other amino acids. The chain is Alanine racemase (alr) from Lactococcus lactis subsp. cremoris (strain MG1363).